A 984-amino-acid polypeptide reads, in one-letter code: PAX-interacting protein 1 (984 aa).

2 consecutive BRCT domains span residues 8-93 and 94-183; these read VPEE…GFSP and ESCQ…LYHP. Positions 94 to 183 are interaction with PAGR1; sequence ESCQIFFGIT…TRKDEALYHP (90 aa). Disordered regions lie at residues 187–271 and 417–509; these read VYEE…PAEV and QQHL…LFGH. Residues 188–208 show a composition bias toward acidic residues; sequence YEEEEEEEEEEEGAGNEEPDS. Residues 217-229 show a composition bias toward low complexity; it reads KSSPASSQEGSPS. Phosphoserine occurs at positions 227 and 235. A compositionally biased stretch (pro residues) spans 424–454; the sequence is PYPPPPPHPFPPPPAHPHQFPQPPLQRPQPP. Over residues 455-485 the composition is skewed to low complexity; the sequence is LQQQQLSHLQQQQLQHLQRLQQMQPTPTAQL. A compositionally biased stretch (pro residues) spans 486 to 499; the sequence is PGPPAQALQPPPPQ. Positions 505–984 are interaction with TP53BP1; it reads PLFGHDPAVE…TLDYESYKFN (480 aa). 2 BRCT domains span residues 516 to 609 and 616 to 704; these read PEEG…RALH and PGGK…TQYG. A Nuclear localization signal motif is present at residues 583-600; that stretch reads RKRCITAHWLNTVLKKKK. The disordered stretch occupies residues 750 to 771; sequence KQNEVTNVQPSSKRARIEDIPP. The span at 752–761 shows a compositional bias: polar residues; sequence NEVTNVQPSS. BRCT domains lie at 781–862 and 883–924; these read TPFV…NYLL and HASP…QPSF.

In terms of assembly, interacts with the C-terminal transactivation domain of PAX2. Forms a constitutive complex with PAGR1 independently of the MLL2/MLL3 complex. Interacts with TP53BP1 (when phosphorylated at the N-terminus by ATM). Interacts with HLTF. Component of the KMT2 family MLL2/MLL3 complex (also named ASCOM complex), at least composed of the HMTs KMT2D and/or KMT2C, the common subunits ASH2L, RBBP5, WDR5 and DPY30, and the complex type-specific subunits PAXIP1/PTIP, PAGR1, NCOA6 and KDM6A; required for the association of PAGR1 with the MLL2/MLL3 complex. Interacts with NUPR1; this interaction prevents PAXIP1 inhibition of PAX2 transcription factor activity.

It is found in the nucleus matrix. Its subcellular location is the chromosome. In terms of biological role, involved in DNA damage response and in transcriptional regulation through histone methyltransferase (HMT) complexes. Plays a role in early development. In DNA damage response is required for cell survival after ionizing radiation. In vitro shown to be involved in the homologous recombination mechanism for the repair of double-strand breaks (DSBs). Its localization to DNA damage foci requires RNF8 and UBE2N. Recruits TP53BP1 to DNA damage foci and, at least in particular repair processes, effective DNA damage response appears to require the association with TP53BP1 phosphorylated by ATM at 'Ser-25'. Together with TP53BP1 regulates ATM association. Proposed to recruit PAGR1 to sites of DNA damage and the PAGR1:PAXIP1 complex is required for cell survival in response to DNA damage; the function is probably independent of MLL-containing histone methyltransferase (HMT) complexes. However, this function has been questioned. Promotes ubiquitination of PCNA following UV irradiation and may regulate recruitment of polymerase eta and RAD51 to chromatin after DNA damage. Proposed to be involved in transcriptional regulation by linking MLL-containing histone methyltransferase (HMT) complexes to gene promoters by interacting with promoter-bound transcription factors such as PAX2. Associates with gene promoters that are known to be regulated by KMT2D/MLL2. During immunoglobulin class switching in activated B-cells is involved in trimethylation of histone H3 at 'Lys-4' and in transcription initiation of downstream switch regions at the immunoglobulin heavy-chain (Igh) locus; this function appears to involve the recruitment of MLL-containing HMT complexes. Conflictingly, its function in transcriptional regulation during immunoglobulin class switching is reported to be independent of the MLL2/MLL3 complex. This chain is PAX-interacting protein 1 (PAXIP1), found in Bos taurus (Bovine).